Consider the following 154-residue polypeptide: 6,7-dimethyl-8-ribityllumazine synthase (154 aa).

5-amino-6-(D-ribitylamino)uracil is bound by residues Phe-26, 60–62, and 84–86; these read ALE and CII. Residue 89–90 participates in (2S)-2-hydroxy-3-oxobutyl phosphate binding; it reads QT. Residue His-92 is the Proton donor of the active site. Asn-117 contacts 5-amino-6-(D-ribitylamino)uracil. Arg-131 serves as a coordination point for (2S)-2-hydroxy-3-oxobutyl phosphate.

This sequence belongs to the DMRL synthase family.

The enzyme catalyses (2S)-2-hydroxy-3-oxobutyl phosphate + 5-amino-6-(D-ribitylamino)uracil = 6,7-dimethyl-8-(1-D-ribityl)lumazine + phosphate + 2 H2O + H(+). Its pathway is cofactor biosynthesis; riboflavin biosynthesis; riboflavin from 2-hydroxy-3-oxobutyl phosphate and 5-amino-6-(D-ribitylamino)uracil: step 1/2. Functionally, catalyzes the formation of 6,7-dimethyl-8-ribityllumazine by condensation of 5-amino-6-(D-ribitylamino)uracil with 3,4-dihydroxy-2-butanone 4-phosphate. This is the penultimate step in the biosynthesis of riboflavin. The chain is 6,7-dimethyl-8-ribityllumazine synthase from Verminephrobacter eiseniae (strain EF01-2).